Reading from the N-terminus, the 272-residue chain is Tryptophan synthase alpha chain (272 aa).

Catalysis depends on proton acceptor residues glutamate 49 and glutamate 60.

This sequence belongs to the TrpA family. As to quaternary structure, tetramer of two alpha and two beta chains.

The enzyme catalyses (1S,2R)-1-C-(indol-3-yl)glycerol 3-phosphate + L-serine = D-glyceraldehyde 3-phosphate + L-tryptophan + H2O. The protein operates within amino-acid biosynthesis; L-tryptophan biosynthesis; L-tryptophan from chorismate: step 5/5. Its function is as follows. The alpha subunit is responsible for the aldol cleavage of indoleglycerol phosphate to indole and glyceraldehyde 3-phosphate. This Legionella pneumophila subsp. pneumophila (strain Philadelphia 1 / ATCC 33152 / DSM 7513) protein is Tryptophan synthase alpha chain.